A 98-amino-acid polypeptide reads, in one-letter code: Ribonuclease kappa (98 aa).

Transmembrane regions (helical) follow at residues 13–33 (ACGIVLSAWGVIMLIMLGIFF) and 65–85 (VSYNCFIAASLYLLLGGFSFC).

This sequence belongs to the RNase K family. In terms of assembly, interacts with the proton translocation complex V0 of the V-ATPase. Interacts with ATP6AP1. As to expression, expressed in brain (at protein level).

The protein resides in the endomembrane system. It localises to the cytoplasmic vesicle. It is found in the clathrin-coated vesicle membrane. Functionally, endoribonuclease which preferentially cleaves ApU and ApG phosphodiester bonds. Hydrolyzes UpU bonds at a lower rate. Regulates the activity of vacuolar (H+)-ATPase (V-ATPase) which is responsible for acidifying and maintaining the pH of intracellular compartments. Required at an early stage of receptor-mediated endocytosis. This is Ribonuclease kappa (RNASEK) from Bos taurus (Bovine).